We begin with the raw amino-acid sequence, 303 residues long: Counting factor 50 (303 aa).

An N-terminal signal peptide occupies residues Met-1–Gly-24. The Ch-type lysozyme domain maps to Ile-28–Gly-240. N-linked (GlcNAc...) asparagine glycosylation is present at Asn-67. Residue Glu-125 is part of the active site. Asn-170 is a glycosylation site (N-linked (GlcNAc...) asparagine). The tract at residues Gly-226–Ile-303 is S-G-S motif repeats. A compositionally biased stretch (low complexity) spans Gly-236 to Ala-292. Residues Gly-236–Ile-303 form a disordered region. Positions Ser-293–Ile-303 are enriched in gly residues.

Belongs to the glycosyl hydrolase 25 family. Monomer. Component of the counting factor (CF) complex, which includes cf60, cf50, cf45-1 and ctnA.

The protein localises to the secreted. It catalyses the reaction Hydrolysis of (1-&gt;4)-beta-linkages between N-acetylmuramic acid and N-acetyl-D-glucosamine residues in a peptidoglycan and between N-acetyl-D-glucosamine residues in chitodextrins.. Cell-counting factor that limits the maximum size of the multicellular structure during aggregation. Has a very low lysozyme activity. In Dictyostelium discoideum (Social amoeba), this protein is Counting factor 50 (cf50-1).